We begin with the raw amino-acid sequence, 513 residues long: Histidine ammonia-lyase (513 aa).

Residues 144 to 146 constitute a cross-link (5-imidazolinone (Ala-Gly)); the sequence is ASG. S145 bears the 2,3-didehydroalanine (Ser) mark.

The protein belongs to the PAL/histidase family. In terms of processing, contains an active site 4-methylidene-imidazol-5-one (MIO), which is formed autocatalytically by cyclization and dehydration of residues Ala-Ser-Gly.

It is found in the cytoplasm. It catalyses the reaction L-histidine = trans-urocanate + NH4(+). It participates in amino-acid degradation; L-histidine degradation into L-glutamate; N-formimidoyl-L-glutamate from L-histidine: step 1/3. This is Histidine ammonia-lyase from Streptococcus pyogenes serotype M1.